A 691-amino-acid polypeptide reads, in one-letter code: Elongation factor G (691 aa).

Positions 8 to 283 (EDYRNFGIMA…AVVDYLPTPI (276 aa)) constitute a tr-type G domain. Residues 17–24 (AHIDAGKT), 81–85 (DTPGH), and 135–138 (NKMD) contribute to the GTP site.

This sequence belongs to the TRAFAC class translation factor GTPase superfamily. Classic translation factor GTPase family. EF-G/EF-2 subfamily.

The protein resides in the cytoplasm. Functionally, catalyzes the GTP-dependent ribosomal translocation step during translation elongation. During this step, the ribosome changes from the pre-translocational (PRE) to the post-translocational (POST) state as the newly formed A-site-bound peptidyl-tRNA and P-site-bound deacylated tRNA move to the P and E sites, respectively. Catalyzes the coordinated movement of the two tRNA molecules, the mRNA and conformational changes in the ribosome. The sequence is that of Elongation factor G from Beijerinckia indica subsp. indica (strain ATCC 9039 / DSM 1715 / NCIMB 8712).